The sequence spans 172 residues: Adenine phosphoribosyltransferase (172 aa).

It belongs to the purine/pyrimidine phosphoribosyltransferase family. In terms of assembly, homodimer.

The protein resides in the cytoplasm. It carries out the reaction AMP + diphosphate = 5-phospho-alpha-D-ribose 1-diphosphate + adenine. Its pathway is purine metabolism; AMP biosynthesis via salvage pathway; AMP from adenine: step 1/1. Catalyzes a salvage reaction resulting in the formation of AMP, that is energically less costly than de novo synthesis. The protein is Adenine phosphoribosyltransferase of Alkaliphilus oremlandii (strain OhILAs) (Clostridium oremlandii (strain OhILAs)).